The primary structure comprises 51 residues: Insulin (51 aa).

3 cysteine pairs are disulfide-bonded: Cys-7/Cys-36, Cys-19/Cys-49, and Cys-35/Cys-40.

Belongs to the insulin family. As to quaternary structure, heterodimer of a B chain and an A chain linked by two disulfide bonds.

Its subcellular location is the secreted. Functionally, insulin decreases blood glucose concentration. It increases cell permeability to monosaccharides, amino acids and fatty acids. It accelerates glycolysis, the pentose phosphate cycle, and glycogen synthesis in liver. This Myocastor coypus (Coypu) protein is Insulin (INS).